The sequence spans 263 residues: Methylesterase 3 (263 aa).

Catalysis depends on Ser85, which acts as the Acyl-ester intermediate. Residues Asp213 and His241 each act as charge relay system in the active site.

Belongs to the AB hydrolase superfamily. Methylesterase family.

It catalyses the reaction methyl (indol-3-yl)acetate + H2O = (indol-3-yl)acetate + methanol + H(+). The catalysed reaction is methyl (-)-jasmonate + H2O = jasmonate + methanol + H(+). It functions in the pathway plant hormone biosynthesis. It participates in lipid metabolism; oxylipin biosynthesis. Methylesterase shown to have carboxylesterase activity, methyl indole-3-acetic acid (MeIAA) esterase activity and methyl jasmonate (MeJA) esterase activity in vitro. The chain is Methylesterase 3 from Arabidopsis thaliana (Mouse-ear cress).